Reading from the N-terminus, the 284-residue chain is F-box protein PP2-B5 (284 aa).

Residues 32-80 enclose the F-box domain; sequence ASFDDLPDDCLAIISSFTSTPRDAFLAALVSKSFGLQFNSDSVWEKFLP.

This Arabidopsis thaliana (Mouse-ear cress) protein is F-box protein PP2-B5 (PP2B5).